A 231-amino-acid chain; its full sequence is Potassium/proton antiporter CemA (231 aa).

4 helical membrane-spanning segments follow: residues 7 to 27 (FIPL…SFTF), 104 to 124 (IHTI…SVYS), 154 to 174 (ILFL…ELMI), and 189 to 209 (IISF…KYWI).

It belongs to the CemA family.

The protein resides in the plastid. It is found in the chloroplast inner membrane. It catalyses the reaction K(+)(in) + H(+)(out) = K(+)(out) + H(+)(in). Its function is as follows. Contributes to K(+)/H(+) antiport activity by supporting proton efflux to control proton extrusion and homeostasis in chloroplasts in a light-dependent manner to modulate photosynthesis. Prevents excessive induction of non-photochemical quenching (NPQ) under continuous-light conditions. Indirectly promotes efficient inorganic carbon uptake into chloroplasts. This chain is Potassium/proton antiporter CemA, found in Pisum sativum (Garden pea).